Reading from the N-terminus, the 891-residue chain is DNA mismatch repair protein MutS (891 aa).

Residue 634 to 641 participates in ATP binding; the sequence is GPNMGGKS.

This sequence belongs to the DNA mismatch repair MutS family.

Functionally, this protein is involved in the repair of mismatches in DNA. It is possible that it carries out the mismatch recognition step. This protein has a weak ATPase activity. This Burkholderia pseudomallei (strain 668) protein is DNA mismatch repair protein MutS.